Reading from the N-terminus, the 348-residue chain is Small ribosomal subunit biogenesis GTPase RsgA (348 aa).

A compositionally biased stretch (basic residues) spans 1–14 (MAKRKLSKQQKWRI). The interval 1–39 (MAKRKLSKQQKWRIQKIQDERTKRATRKETQLESQLSGG) is disordered. Over residues 16–31 (KIQDERTKRATRKETQ) the composition is skewed to basic and acidic residues. The 160-residue stretch at 116–275 (FGQLKPIAAN…LIDSPGIREF (160 aa)) folds into the CP-type G domain. GTP contacts are provided by residues 163 to 166 (NKQD) and 217 to 225 (GQSGVGKSS). Cys-299, Cys-304, His-306, and Cys-312 together coordinate Zn(2+).

The protein belongs to the TRAFAC class YlqF/YawG GTPase family. RsgA subfamily. Monomer. Associates with 30S ribosomal subunit, binds 16S rRNA. It depends on Zn(2+) as a cofactor.

The protein resides in the cytoplasm. One of several proteins that assist in the late maturation steps of the functional core of the 30S ribosomal subunit. Helps release RbfA from mature subunits. May play a role in the assembly of ribosomal proteins into the subunit. Circularly permuted GTPase that catalyzes slow GTP hydrolysis, GTPase activity is stimulated by the 30S ribosomal subunit. In Hahella chejuensis (strain KCTC 2396), this protein is Small ribosomal subunit biogenesis GTPase RsgA.